A 386-amino-acid chain; its full sequence is 5-hydroxytryptamine receptor 1B (386 aa).

Topologically, residues 1–42 are extracellular; sequence MEEQGIQCAPPPPAASQTGVPLVNLSHNCSAESHIYQDSIAL. N-linked (GlcNAc...) asparagine glycosylation is found at asparagine 24 and asparagine 28. A helical membrane pass occupies residues 43-68; it reads PWKVLLVALLALITLATTLSNAFVIA. Topologically, residues 69–82 are cytoplasmic; sequence TVYRTRKLHTPANY. A helical transmembrane segment spans residues 83–107; the sequence is LIASLAVTDLLVSILVMPVSTMYTV. Topologically, residues 108–115 are extracellular; that stretch reads TGRWTLGQ. The helical transmembrane segment at 116 to 141 threads the bilayer; that stretch reads VVCDFWLSSDITCCTASIMHLCVIAL. A disulfide bridge connects residues cysteine 118 and cysteine 195. Ergotamine is bound by residues aspartate 125 and threonine 130. The DRY motif; important for ligand-induced conformation changes and signaling signature appears at 142–144; that stretch reads DRY. The Cytoplasmic segment spans residues 142 to 161; that stretch reads DRYWAITDAVEYAAKRTPKR. A helical membrane pass occupies residues 162–180; the sequence is AAIMIALVWVFSISISLPP. At 181–201 the chain is on the extracellular side; sequence FFWRQAKAEEEVLTCLVNTDH. Residue valine 197 participates in ergotamine binding. A helical membrane pass occupies residues 202-225; it reads VLYTVYSTGGAFYLPTLLLIALYG. The Cytoplasmic portion of the chain corresponds to 226–311; it reads RIYVEARSRI…AARERKATKT (86 aa). The segment covering 255–268 has biased composition (polar residues); it reads DSPGSTTSVTSINS. The interval 255 to 278 is disordered; it reads DSPGSTTSVTSINSRAPDLPSESG. Residues 312 to 333 form a helical membrane-spanning segment; the sequence is LGIILGAFIVCWLPFFIISLVM. Over 334–343 the chain is Extracellular; it reads PICKDACWFH. A helical membrane pass occupies residues 344–366; sequence MATLDFFNWLGYLNSLINPIIYT. Residues 361-365 carry the NPxxY motif; important for ligand-induced conformation changes and signaling motif; the sequence is NPIIY. Topologically, residues 367–386 are cytoplasmic; the sequence is MSNEDFKQAFHKLIRFKCAG. Cysteine 384 is lipidated: S-palmitoyl cysteine.

The protein belongs to the G-protein coupled receptor 1 family. Homodimer. Heterodimer with HTR1D. In terms of processing, phosphorylated. Desensitization of the receptor may be mediated by its phosphorylation. Palmitoylated.

It is found in the cell membrane. Its function is as follows. G-protein coupled receptor for 5-hydroxytryptamine (serotonin). Also functions as a receptor for ergot alkaloid derivatives, various anxiolytic and antidepressant drugs and other psychoactive substances, such as lysergic acid diethylamide (LSD). Ligand binding causes a conformation change that triggers signaling via guanine nucleotide-binding proteins (G proteins) and modulates the activity of downstream effectors, such as adenylate cyclase. HTR1B is coupled to G(i)/G(o) G alpha proteins and mediates inhibitory neurotransmission by inhibiting adenylate cyclase activity. Arrestin family members inhibit signaling via G proteins and mediate activation of alternative signaling pathways. Regulates the release of 5-hydroxytryptamine, dopamine and acetylcholine in the brain, and thereby affects neural activity, nociceptive processing, pain perception, mood and behavior. Besides, plays a role in vasoconstriction of cerebral arteries. In Cricetulus griseus (Chinese hamster), this protein is 5-hydroxytryptamine receptor 1B (HTR1B).